Consider the following 298-residue polypeptide: HTH-type transcriptional regulator ArgP (298 aa).

The HTH lysR-type domain occupies 4 to 60 (LDYKWIEALDAVVAQGGFERAAEELYISQSAVSQRIKQLERFLAQPVLIREQPPKPT). Residues 21-40 (FERAAEELYISQSAVSQRIK) constitute a DNA-binding region (H-T-H motif).

It belongs to the LysR transcriptional regulatory family. In terms of assembly, homodimer.

Its function is as follows. Controls the transcription of genes involved in arginine and lysine metabolism. The polypeptide is HTH-type transcriptional regulator ArgP (Vibrio vulnificus (strain CMCP6)).